Consider the following 75-residue polypeptide: Small ribosomal subunit protein bS18 (75 aa).

Belongs to the bacterial ribosomal protein bS18 family. In terms of assembly, part of the 30S ribosomal subunit. Forms a tight heterodimer with protein bS6.

Its function is as follows. Binds as a heterodimer with protein bS6 to the central domain of the 16S rRNA, where it helps stabilize the platform of the 30S subunit. The protein is Small ribosomal subunit protein bS18 of Klebsiella pneumoniae (strain 342).